We begin with the raw amino-acid sequence, 108 residues long: Large ribosomal subunit protein bL21 (108 aa).

This sequence belongs to the bacterial ribosomal protein bL21 family. Part of the 50S ribosomal subunit. Contacts protein L20.

Its function is as follows. This protein binds to 23S rRNA in the presence of protein L20. The chain is Large ribosomal subunit protein bL21 from Orientia tsutsugamushi (strain Ikeda) (Rickettsia tsutsugamushi).